Consider the following 660-residue polypeptide: U-box domain-containing protein 13 (660 aa).

Residues 227 to 252 are disordered; it reads DDNGEEQKVGVNSRSNGQTSTAASQK. Polar residues predominate over residues 236-250; it reads GVNSRSNGQTSTAAS. One can recognise a U-box domain in the interval 255–329; that stretch reads VIPDDFRCPI…AQWCEANDIE (75 aa). ARM repeat units lie at residues 384 to 423, 425 to 464, 466 to 505, 507 to 546, and 548 to 587; these read ADNRVAIAEAGAIPLLVGLLSTPDSRIQEHSVTALLNLSI, ENNKGAIVSAGAIPGIVQVLKKGSMEARENAAATLFSLSV, DENKVTIGALGAIPPLVVLLNEGTQRGKKDAATALFNLCI, QGNKGKAIRAGVIPTLTRLLTEPGSGMVDEALAILAILSS, and PEGKAIIGSSDAVPSLVEFIRTGSPRNRENAAAVLVHLCS. A disordered region spans residues 631 to 660; that stretch reads AEQQKETAVSQPEEEAEPTHPESTTEAADT. The span at 651 to 660 shows a compositional bias: polar residues; it reads PESTTEAADT.

In terms of assembly, binds to SD11, SD16, SD17, SD18, SD113, SD129 and SD25. In terms of processing, phosphorylated by SD1-6 and SD1-7.

Its subcellular location is the nucleus. The protein localises to the cytoplasm. It carries out the reaction S-ubiquitinyl-[E2 ubiquitin-conjugating enzyme]-L-cysteine + [acceptor protein]-L-lysine = [E2 ubiquitin-conjugating enzyme]-L-cysteine + N(6)-ubiquitinyl-[acceptor protein]-L-lysine.. It participates in protein modification; protein ubiquitination. Functions as an E3 ubiquitin ligase. This is U-box domain-containing protein 13 (PUB13) from Arabidopsis thaliana (Mouse-ear cress).